We begin with the raw amino-acid sequence, 211 residues long: MEDFWEDWDLAFEDVFPKSLKEALEGIKEIPTYGERGASRFMYNLLKLEKEKRKEIIEKVLEAVEVLRPCRECFLITDREVCPICSDEKRSKKFICVVEESQDAYAIEKLERYKGVYHVLQGHIAPLEGISAEDLTIDALMERIKKYQPKEVILATNPNVEGEATANYIAGLIRRKFPAVKITRTAYGFQFGSLIEFVDEYSLEKSMENRK.

Residues 70 to 85 form a C4-type zinc finger; it reads CRECFLITDREVCPIC. Residues 93–190 enclose the Toprim domain; sequence KFICVVEESQ…KITRTAYGFQ (98 aa).

The protein belongs to the RecR family.

Its function is as follows. May play a role in DNA repair. It seems to be involved in an RecBC-independent recombinational process of DNA repair. It may act with RecF and RecO. This Aquifex aeolicus (strain VF5) protein is Recombination protein RecR.